The following is a 232-amino-acid chain: Ion-translocating oxidoreductase complex subunit E (232 aa).

Helical transmembrane passes span 39 to 59 (LGLGLATTLVLTLTNLTISSL), 69 to 89 (IPIYVMIIASVVSVVQMLINA), 92 to 112 (FGLYQSLGIFIPLIVTNCIVV), 125 to 145 (ALSALDGFSIGMGATCAMFVL), and 182 to 202 (PFLLAMLPPGAFIGLGMMLAV).

The protein belongs to the NqrDE/RnfAE family. In terms of assembly, the complex is composed of six subunits: RnfA, RnfB, RnfC, RnfD, RnfE and RnfG.

The protein resides in the cell inner membrane. Its function is as follows. Part of a membrane-bound complex that couples electron transfer with translocation of ions across the membrane. In Klebsiella pneumoniae (strain 342), this protein is Ion-translocating oxidoreductase complex subunit E.